Reading from the N-terminus, the 175-residue chain is MAVRGINKVILVGRLGKDPEVRYIPNGGAVANLQVATSESWRDKQTGEIREQTEWHRVVLFGKLAEVAGEYLRKGAQVYIEGQLRTRSWEDNGITRYVTEILVKTTGTMQMLGRAAGTQTQPEEAQQFSGQPQPESQPEPKKGGAKTKGRERKAAQPEPRQPSEPAYDFDDDIPF.

The SSB domain occupies 6–110 (INKVILVGRL…ILVKTTGTMQ (105 aa)). Residues 55–61 (WHRVVLF) mediate DNA binding. The disordered stretch occupies residues 113-175 (GRAAGTQTQP…AYDFDDDIPF (63 aa)). Over residues 126–136 (QQFSGQPQPES) the composition is skewed to low complexity. Residues 170–175 (DDDIPF) carry the Important for interaction with partner proteins motif.

Homotetramer.

In terms of biological role, may contribute to the conjugative processing of DNA. It has a functional relationship with Psi (plasmid-mediated sos inhibition) proteins. This Escherichia coli protein is Plasmid-derived single-stranded DNA-binding protein (ssb).